Reading from the N-terminus, the 425-residue chain is Serine--tRNA ligase 1 (425 aa).

Position 230-232 (230-232 (TSE)) interacts with L-serine. ATP-binding positions include 261-263 (RRE) and V277. E284 contributes to the L-serine binding site. 348 to 351 (ELTS) serves as a coordination point for ATP. T382 lines the L-serine pocket.

This sequence belongs to the class-II aminoacyl-tRNA synthetase family. Type-1 seryl-tRNA synthetase subfamily. As to quaternary structure, homodimer. The tRNA molecule binds across the dimer.

The protein resides in the cytoplasm. The catalysed reaction is tRNA(Ser) + L-serine + ATP = L-seryl-tRNA(Ser) + AMP + diphosphate + H(+). The enzyme catalyses tRNA(Sec) + L-serine + ATP = L-seryl-tRNA(Sec) + AMP + diphosphate + H(+). The protein operates within aminoacyl-tRNA biosynthesis; selenocysteinyl-tRNA(Sec) biosynthesis; L-seryl-tRNA(Sec) from L-serine and tRNA(Sec): step 1/1. In terms of biological role, catalyzes the attachment of serine to tRNA(Ser). Is also able to aminoacylate tRNA(Sec) with serine, to form the misacylated tRNA L-seryl-tRNA(Sec), which will be further converted into selenocysteinyl-tRNA(Sec). In Streptomyces avermitilis (strain ATCC 31267 / DSM 46492 / JCM 5070 / NBRC 14893 / NCIMB 12804 / NRRL 8165 / MA-4680), this protein is Serine--tRNA ligase 1.